Here is a 261-residue protein sequence, read N- to C-terminus: [LysW]-aminoadipate/[LysW]-glutamate kinase (261 aa).

Substrate contacts are provided by residues 35–36 (GG), R62, and N166.

This sequence belongs to the acetylglutamate kinase family. LysZ subfamily.

The protein resides in the cytoplasm. The enzyme catalyses [amino-group carrier protein]-C-terminal-N-(1,4-dicarboxybutan-1-yl)-L-glutamine + ATP = [amino-group carrier protein]-C-terminal-N-(1-carboxy-5-phosphooxy-5-oxopentan-1-yl)-L-glutamine + ADP. It carries out the reaction [amino-group carrier protein]-C-terminal-gamma-(L-glutamyl)-L-glutamate + ATP = [amino-group carrier protein]-C-terminal-gamma-(5-phospho-L-glutamyl)-L-glutamate + ADP. It functions in the pathway amino-acid biosynthesis; L-lysine biosynthesis via AAA pathway; L-lysine from L-alpha-aminoadipate (Thermus route): step 2/5. It participates in amino-acid biosynthesis; L-arginine biosynthesis. Involved in both the arginine and lysine biosynthetic pathways. Phosphorylates the LysW-bound precursors glutamate (for arginine biosynthesis), respectively alpha-aminoadipate (for lysine biosynthesis). The protein is [LysW]-aminoadipate/[LysW]-glutamate kinase of Sulfurisphaera tokodaii (strain DSM 16993 / JCM 10545 / NBRC 100140 / 7) (Sulfolobus tokodaii).